Consider the following 171-residue polypeptide: MSVLQVLHIPDERLRIVAEPVKEVNADIQRIVDDMFDTMYAEEGIGLAATQVDIHQRIIVIDVSENRDERLVLINPELLEQSGETGIEEGCLSIPEQRAFVPRAEKVKIRALDRDGKSFELEADGLLAICIQHEMDHLVGKLFIDYLSPMKRQRIRQKVEKLDRMKAKAAG.

Residues C91 and H133 each coordinate Fe cation. E134 is an active-site residue. H137 is a Fe cation binding site.

Belongs to the polypeptide deformylase family. The cofactor is Fe(2+).

It carries out the reaction N-terminal N-formyl-L-methionyl-[peptide] + H2O = N-terminal L-methionyl-[peptide] + formate. Its function is as follows. Removes the formyl group from the N-terminal Met of newly synthesized proteins. Requires at least a dipeptide for an efficient rate of reaction. N-terminal L-methionine is a prerequisite for activity but the enzyme has broad specificity at other positions. This chain is Peptide deformylase, found in Cronobacter sakazakii (strain ATCC BAA-894) (Enterobacter sakazakii).